The primary structure comprises 496 residues: MSGLPRSVPDVLDPLGPGAPVLVAGGRVTGQAVAAVLTRFGATPTVCDDDPVMLRPHAERGLPTVSSSDAVQQITGYALVVASPGFSPATPLLAAAAAAGVPIWGDVELAWRLDAAGCYGPPRSWLVVTGTNGKTTTTSMLHAMLIAGGRRAVLCGNIGSAVLDVLDEPAELLAVELSSFQLHWAPSLRPEAGAVLNIAEDHLDWHATMAEYTAAKARVLTGGVAVAGLDDSRAAALLDGSPAQVRVGFRLGEPAAGELGVRDAHLVDRAFSDDLTLLPVASIPVPGPVGVLDALAAAALARSVGVPAGAIADAVTSFRVGRHRAEVVAVADGITYVDDSKATNPHAARASVLAYPRVVWIAGGLLKGASLHAEVAAMASRLVGAVLIGRDRAAVAEALSRHAPDVPVVQVVAGEDTGMPATVEVPVACVLDVAKDDKAGETVGAAVMTAAVAAARRMAQPGDTVLLAPAGASFDQFTGYADRGEAFATAVRAVIR.

An ATP-binding site is contributed by 130–136 (GTNGKTT).

Belongs to the MurCDEF family.

The protein resides in the cytoplasm. The catalysed reaction is UDP-N-acetyl-alpha-D-muramoyl-L-alanine + D-glutamate + ATP = UDP-N-acetyl-alpha-D-muramoyl-L-alanyl-D-glutamate + ADP + phosphate + H(+). It functions in the pathway cell wall biogenesis; peptidoglycan biosynthesis. Functionally, cell wall formation. Catalyzes the addition of glutamate to the nucleotide precursor UDP-N-acetylmuramoyl-L-alanine (UMA). In Mycobacterium bovis (strain ATCC BAA-935 / AF2122/97), this protein is UDP-N-acetylmuramoylalanine--D-glutamate ligase.